The chain runs to 336 residues: Serpentine receptor class gamma-13 (336 aa).

8 helical membrane passes run 32–52, 68–88, 93–113, 133–153, 156–176, 210–230, 246–266, and 277–297; these read LKYI…FLII, FFII…SEIL, FIYV…PSIF, VFLS…SAIW, ILTP…WNVL, FIVS…ALLI, TMVL…FAFF, and LLRV…IIFI.

The protein belongs to the nematode receptor-like protein srg family.

It is found in the membrane. This is Serpentine receptor class gamma-13 (srg-13) from Caenorhabditis elegans.